Reading from the N-terminus, the 325-residue chain is uncharacterized protein (325 aa).

The tract at residues 1–75 is disordered; that stretch reads MSQPPEHPGN…PPPGYPTHLQ (75 aa). Pro residues predominate over residues 24-70; that stretch reads YPPPGYGAPPPPPGYGPPPGTYLPPGYNAPPPPPGYGPPPGPPPPGY. 4 helical membrane passes run 96 to 116, 153 to 173, 205 to 225, and 273 to 293; these read AVTL…VIGA, IVMF…HAGI, LLIV…GLIF, and LVGE…AALI.

It is found in the cell membrane. This is an uncharacterized protein from Mycobacterium tuberculosis (strain ATCC 25618 / H37Rv).